The sequence spans 149 residues: UPF0178 protein lwe1471 (149 aa).

It belongs to the UPF0178 family.

The polypeptide is UPF0178 protein lwe1471 (Listeria welshimeri serovar 6b (strain ATCC 35897 / DSM 20650 / CCUG 15529 / CIP 8149 / NCTC 11857 / SLCC 5334 / V8)).